Consider the following 546-residue polypeptide: Tryptophan biosynthesis protein TrpCD (546 aa).

Positions 1–226 (MMDFGFVDSL…FVQTVCGGEK (226 aa)) are indole-3-glycerol phosphate synthase. The tract at residues 227–546 (MIEDVLRGLD…EEIACKSTSM (320 aa)) is anthranilate phosphoribosyltransferase. 5-phospho-alpha-D-ribose 1-diphosphate contacts are provided by residues Gly295, 298–299 (GD), Ser303, 305–308 (NVST), 322–330 (KHGNRAVSS), and Ser334. Residue Gly295 coordinates anthranilate. Ser307 is a binding site for Mg(2+). Asn325 serves as a coordination point for anthranilate. Anthranilate is bound at residue Arg380. Mg(2+) contacts are provided by Asp437 and Glu438.

It in the N-terminal section; belongs to the TrpC family. This sequence in the C-terminal section; belongs to the anthranilate phosphoribosyltransferase family. Mg(2+) serves as cofactor.

The enzyme catalyses 1-(2-carboxyphenylamino)-1-deoxy-D-ribulose 5-phosphate + H(+) = (1S,2R)-1-C-(indol-3-yl)glycerol 3-phosphate + CO2 + H2O. The catalysed reaction is N-(5-phospho-beta-D-ribosyl)anthranilate + diphosphate = 5-phospho-alpha-D-ribose 1-diphosphate + anthranilate. It functions in the pathway amino-acid biosynthesis; L-tryptophan biosynthesis; L-tryptophan from chorismate: step 2/5. It participates in amino-acid biosynthesis; L-tryptophan biosynthesis; L-tryptophan from chorismate: step 4/5. Functionally, bifunctional enzyme that catalyzes the second and fourth steps of tryptophan biosynthetic pathway. The second step is catalyzed by the anthranilate phosphoribosyltransferase, coded by the TrpD domain and the fourth step is catalyzed by indole-3-glycerol phosphate synthase, coded by the TrpC domain. The protein is Tryptophan biosynthesis protein TrpCD (trpCD) of Archaeoglobus fulgidus (strain ATCC 49558 / DSM 4304 / JCM 9628 / NBRC 100126 / VC-16).